The chain runs to 219 residues: Ribose-5-phosphate isomerase A (219 aa).

Substrate is bound by residues 28–31 (TGST), 81–84 (DGAD), and 94–97 (KGGG). E103 acts as the Proton acceptor in catalysis. Residue K121 coordinates substrate.

This sequence belongs to the ribose 5-phosphate isomerase family. Homodimer.

The enzyme catalyses aldehydo-D-ribose 5-phosphate = D-ribulose 5-phosphate. It functions in the pathway carbohydrate degradation; pentose phosphate pathway; D-ribose 5-phosphate from D-ribulose 5-phosphate (non-oxidative stage): step 1/1. Its function is as follows. Catalyzes the reversible conversion of ribose-5-phosphate to ribulose 5-phosphate. The chain is Ribose-5-phosphate isomerase A from Shewanella loihica (strain ATCC BAA-1088 / PV-4).